A 227-amino-acid polypeptide reads, in one-letter code: Cytochrome c oxidase subunit 2 (227 aa).

At 1-14 (MAYPLQMGLQDATS) the chain is on the mitochondrial intermembrane side. Residues 15 to 45 (PIMEELLHFHDHTLMIVFLISSLVLYIISLM) traverse the membrane as a helical segment. Topologically, residues 46–59 (LTTKLTHTSTMDAQ) are mitochondrial matrix. A helical membrane pass occupies residues 60–87 (EVETVWTILPAIILILIALPSLRILYMM). Residues 88-227 (DEINNPSLTV…HFEKWSTSML (140 aa)) are Mitochondrial intermembrane-facing. Residues His161, Cys196, Glu198, Cys200, His204, and Met207 each coordinate Cu cation. Glu198 contributes to the Mg(2+) binding site.

It belongs to the cytochrome c oxidase subunit 2 family. In terms of assembly, component of the cytochrome c oxidase (complex IV, CIV), a multisubunit enzyme composed of 14 subunits. The complex is composed of a catalytic core of 3 subunits MT-CO1, MT-CO2 and MT-CO3, encoded in the mitochondrial DNA, and 11 supernumerary subunits COX4I, COX5A, COX5B, COX6A, COX6B, COX6C, COX7A, COX7B, COX7C, COX8 and NDUFA4, which are encoded in the nuclear genome. The complex exists as a monomer or a dimer and forms supercomplexes (SCs) in the inner mitochondrial membrane with NADH-ubiquinone oxidoreductase (complex I, CI) and ubiquinol-cytochrome c oxidoreductase (cytochrome b-c1 complex, complex III, CIII), resulting in different assemblies (supercomplex SCI(1)III(2)IV(1) and megacomplex MCI(2)III(2)IV(2)). Found in a complex with TMEM177, COA6, COX18, COX20, SCO1 and SCO2. Interacts with TMEM177 in a COX20-dependent manner. Interacts with COX20. Interacts with COX16. It depends on Cu cation as a cofactor.

The protein resides in the mitochondrion inner membrane. It carries out the reaction 4 Fe(II)-[cytochrome c] + O2 + 8 H(+)(in) = 4 Fe(III)-[cytochrome c] + 2 H2O + 4 H(+)(out). Its function is as follows. Component of the cytochrome c oxidase, the last enzyme in the mitochondrial electron transport chain which drives oxidative phosphorylation. The respiratory chain contains 3 multisubunit complexes succinate dehydrogenase (complex II, CII), ubiquinol-cytochrome c oxidoreductase (cytochrome b-c1 complex, complex III, CIII) and cytochrome c oxidase (complex IV, CIV), that cooperate to transfer electrons derived from NADH and succinate to molecular oxygen, creating an electrochemical gradient over the inner membrane that drives transmembrane transport and the ATP synthase. Cytochrome c oxidase is the component of the respiratory chain that catalyzes the reduction of oxygen to water. Electrons originating from reduced cytochrome c in the intermembrane space (IMS) are transferred via the dinuclear copper A center (CU(A)) of subunit 2 and heme A of subunit 1 to the active site in subunit 1, a binuclear center (BNC) formed by heme A3 and copper B (CU(B)). The BNC reduces molecular oxygen to 2 water molecules using 4 electrons from cytochrome c in the IMS and 4 protons from the mitochondrial matrix. The chain is Cytochrome c oxidase subunit 2 (MT-CO2) from Phoca vitulina (Harbor seal).